The following is a 397-amino-acid chain: Enoyl-[acyl-carrier-protein] reductase [NADH] (397 aa).

Residues 48-53 (GASTGY), 74-75 (FE), 111-112 (DA), and 139-140 (LA) each bind NAD(+). Residue Tyr225 participates in substrate binding. Tyr235 (proton donor) is an active-site residue. NAD(+) contacts are provided by residues Lys244 and 273-275 (VVT).

Belongs to the TER reductase family. In terms of assembly, monomer.

It carries out the reaction a 2,3-saturated acyl-[ACP] + NAD(+) = a (2E)-enoyl-[ACP] + NADH + H(+). It participates in lipid metabolism; fatty acid biosynthesis. In terms of biological role, involved in the final reduction of the elongation cycle of fatty acid synthesis (FAS II). Catalyzes the reduction of a carbon-carbon double bond in an enoyl moiety that is covalently linked to an acyl carrier protein (ACP). This Pseudoalteromonas translucida (strain TAC 125) protein is Enoyl-[acyl-carrier-protein] reductase [NADH].